The sequence spans 159 residues: Cyclic pyranopterin monophosphate synthase (159 aa).

Residues 75–77 and 113–114 contribute to the substrate site; these read LCH and ME. Asp-128 is an active-site residue.

It belongs to the MoaC family. In terms of assembly, homohexamer; trimer of dimers.

The catalysed reaction is (8S)-3',8-cyclo-7,8-dihydroguanosine 5'-triphosphate = cyclic pyranopterin phosphate + diphosphate. It functions in the pathway cofactor biosynthesis; molybdopterin biosynthesis. Functionally, catalyzes the conversion of (8S)-3',8-cyclo-7,8-dihydroguanosine 5'-triphosphate to cyclic pyranopterin monophosphate (cPMP). The polypeptide is Cyclic pyranopterin monophosphate synthase (Yersinia pseudotuberculosis serotype O:3 (strain YPIII)).